Reading from the N-terminus, the 147-residue chain is Holdfast attachment protein A (147 aa).

In terms of biological role, involved in attachment of the holdfast to the cell. The holdfast is a structure that allows the bacteria to firmly adheres to surfaces. This is Holdfast attachment protein A (hfaA) from Caulobacter vibrioides (strain ATCC 19089 / CIP 103742 / CB 15) (Caulobacter crescentus).